We begin with the raw amino-acid sequence, 62 residues long: Small ribosomal subunit protein uS14 (62 aa).

Positions 25, 28, 41, and 44 each coordinate Zn(2+).

This sequence belongs to the universal ribosomal protein uS14 family. Zinc-binding uS14 subfamily. Part of the 30S ribosomal subunit. Contacts proteins S3 and S10. The cofactor is Zn(2+).

In terms of biological role, binds 16S rRNA, required for the assembly of 30S particles and may also be responsible for determining the conformation of the 16S rRNA at the A site. This is Small ribosomal subunit protein uS14 from Persephonella marina (strain DSM 14350 / EX-H1).